A 162-amino-acid chain; its full sequence is NADH-quinone oxidoreductase subunit I (162 aa).

2 4Fe-4S ferredoxin-type domains span residues 52 to 82 and 93 to 122; these read LRRY…IEAG and VRYD…EGPN. Positions 62, 65, 68, 72, 102, 105, 108, and 112 each coordinate [4Fe-4S] cluster.

This sequence belongs to the complex I 23 kDa subunit family. In terms of assembly, NDH-1 is composed of 14 different subunits. Subunits NuoA, H, J, K, L, M, N constitute the membrane sector of the complex. It depends on [4Fe-4S] cluster as a cofactor.

It is found in the cell inner membrane. It catalyses the reaction a quinone + NADH + 5 H(+)(in) = a quinol + NAD(+) + 4 H(+)(out). NDH-1 shuttles electrons from NADH, via FMN and iron-sulfur (Fe-S) centers, to quinones in the respiratory chain. The immediate electron acceptor for the enzyme in this species is believed to be ubiquinone. Couples the redox reaction to proton translocation (for every two electrons transferred, four hydrogen ions are translocated across the cytoplasmic membrane), and thus conserves the redox energy in a proton gradient. This Afipia carboxidovorans (strain ATCC 49405 / DSM 1227 / KCTC 32145 / OM5) (Oligotropha carboxidovorans) protein is NADH-quinone oxidoreductase subunit I.